A 382-amino-acid chain; its full sequence is Galactokinase (382 aa).

Position 34–37 (34–37 (EHTD)) interacts with substrate. An ATP-binding site is contributed by 124-130 (GAGLSSS). Mg(2+) contacts are provided by Ser-130 and Glu-162. Asp-174 functions as the Proton acceptor in the catalytic mechanism. Tyr-223 provides a ligand contact to substrate.

The protein belongs to the GHMP kinase family. GalK subfamily.

It localises to the cytoplasm. It carries out the reaction alpha-D-galactose + ATP = alpha-D-galactose 1-phosphate + ADP + H(+). It participates in carbohydrate metabolism; galactose metabolism. Its function is as follows. Catalyzes the transfer of the gamma-phosphate of ATP to D-galactose to form alpha-D-galactose-1-phosphate (Gal-1-P). This chain is Galactokinase, found in Citrobacter koseri (strain ATCC BAA-895 / CDC 4225-83 / SGSC4696).